Reading from the N-terminus, the 292-residue chain is Undecaprenyl-diphosphatase (292 aa).

7 helical membrane passes run 1 to 21, 46 to 66, 90 to 110, 114 to 134, 192 to 212, 225 to 245, and 253 to 273; these read MSLVSAALFGLLQALTEFLPV, FVTIIQAGTTLAVLVYFRADI, LGWYIVLGTVPAALAGKLLEH, ALGNWVIAGSLVALGLVLLAA, FLLSVPITLAAGAYKLWSTVP, VVGTVVSAVAGYLVIDWLLAW, and VFVVWRLAAGAAIAALILSGV.

This sequence belongs to the UppP family.

It is found in the cell inner membrane. It carries out the reaction di-trans,octa-cis-undecaprenyl diphosphate + H2O = di-trans,octa-cis-undecaprenyl phosphate + phosphate + H(+). Functionally, catalyzes the dephosphorylation of undecaprenyl diphosphate (UPP). Confers resistance to bacitracin. This is Undecaprenyl-diphosphatase from Anaeromyxobacter dehalogenans (strain 2CP-1 / ATCC BAA-258).